A 201-amino-acid chain; its full sequence is Glycerol-3-phosphate acyltransferase (201 aa).

6 consecutive transmembrane segments (helical) span residues 3 to 23 (TVLFALGAYLIGSISFAVVVS), 51 to 71 (KAAILTLLGDGAKGFLAVWLV), 85 to 105 (VALVAIAVFLGHLWPVFFRFV), 116 to 136 (VLLALNGWLGLATLVTWLVIA), 137 to 157 (YAFRYSSLAALIAAIFAPFYY), and 158 to 178 (GLLFGPDVILLAVLAMSILLV).

Belongs to the PlsY family. In terms of assembly, probably interacts with PlsX.

It is found in the cell inner membrane. It catalyses the reaction an acyl phosphate + sn-glycerol 3-phosphate = a 1-acyl-sn-glycero-3-phosphate + phosphate. It functions in the pathway lipid metabolism; phospholipid metabolism. Its function is as follows. Catalyzes the transfer of an acyl group from acyl-phosphate (acyl-PO(4)) to glycerol-3-phosphate (G3P) to form lysophosphatidic acid (LPA). This enzyme utilizes acyl-phosphate as fatty acyl donor, but not acyl-CoA or acyl-ACP. The chain is Glycerol-3-phosphate acyltransferase from Janthinobacterium sp. (strain Marseille) (Minibacterium massiliensis).